Consider the following 68-residue polypeptide: MPQLDTSTWSITIVSMIITLFIMFQLKLSKYSYPSSPELKLTKTPTHTTPWESKWTKTYLPLSLPQQS.

The helical transmembrane segment at 8–24 threads the bilayer; sequence TWSITIVSMIITLFIMF. The residue at position 54 (Lys-54) is an N6-acetyllysine; alternate. At Lys-54 the chain carries N6-succinyllysine; alternate. Lys-57 bears the N6-acetyllysine mark.

It belongs to the ATPase protein 8 family. In terms of assembly, component of the ATP synthase complex composed at least of ATP5F1A/subunit alpha, ATP5F1B/subunit beta, ATP5MC1/subunit c (homooctomer), MT-ATP6/subunit a, MT-ATP8/subunit 8, ATP5ME/subunit e, ATP5MF/subunit f, ATP5MG/subunit g, ATP5MK/subunit k, ATP5MJ/subunit j, ATP5F1C/subunit gamma, ATP5F1D/subunit delta, ATP5F1E/subunit epsilon, ATP5PF/subunit F6, ATP5PB/subunit b, ATP5PD/subunit d, ATP5PO/subunit OSCP. ATP synthase complex consists of a soluble F(1) head domain (subunits alpha(3) and beta(3)) - the catalytic core - and a membrane F(0) domain - the membrane proton channel (subunits c, a, 8, e, f, g, k and j). These two domains are linked by a central stalk (subunits gamma, delta, and epsilon) rotating inside the F1 region and a stationary peripheral stalk (subunits F6, b, d, and OSCP). Interacts with PRICKLE3.

Its subcellular location is the mitochondrion membrane. Its function is as follows. Subunit 8, of the mitochondrial membrane ATP synthase complex (F(1)F(0) ATP synthase or Complex V) that produces ATP from ADP in the presence of a proton gradient across the membrane which is generated by electron transport complexes of the respiratory chain. ATP synthase complex consist of a soluble F(1) head domain - the catalytic core - and a membrane F(1) domain - the membrane proton channel. These two domains are linked by a central stalk rotating inside the F(1) region and a stationary peripheral stalk. During catalysis, ATP synthesis in the catalytic domain of F(1) is coupled via a rotary mechanism of the central stalk subunits to proton translocation. In vivo, can only synthesize ATP although its ATP hydrolase activity can be activated artificially in vitro. Part of the complex F(0) domain. The protein is ATP synthase F(0) complex subunit 8 of Ceratotherium simum (White rhinoceros).